Here is a 71-residue protein sequence, read N- to C-terminus: ATP synthase F(0) complex subunit e, mitochondrial (71 aa).

The residue at position 34 (Lys34) is an N6-acetyllysine. Ser68 is subject to Phosphoserine.

The protein belongs to the ATPase e subunit family. As to quaternary structure, component of the ATP synthase complex composed at least of ATP5F1A/subunit alpha, ATP5F1B/subunit beta, ATP5MC1/subunit c (homooctomer), MT-ATP6/subunit a, MT-ATP8/subunit 8, ATP5ME/subunit e, ATP5MF/subunit f, ATP5MG/subunit g, ATP5MK/subunit k, ATP5MJ/subunit j, ATP5F1C/subunit gamma, ATP5F1D/subunit delta, ATP5F1E/subunit epsilon, ATP5PF/subunit F6, ATP5PB/subunit b, ATP5PD/subunit d, ATP5PO/subunit OSCP. ATP synthase complex consists of a soluble F(1) head domain (subunits alpha(3) and beta(3)) - the catalytic core - and a membrane F(0) domain - the membrane proton channel (subunits c, a, 8, e, f, g, k and j). These two domains are linked by a central stalk (subunits gamma, delta, and epsilon) rotating inside the F1 region and a stationary peripheral stalk (subunits F6, b, d, and OSCP).

Its subcellular location is the mitochondrion. It localises to the mitochondrion inner membrane. In terms of biological role, subunit e, of the mitochondrial membrane ATP synthase complex (F(1)F(0) ATP synthase or Complex V) that produces ATP from ADP in the presence of a proton gradient across the membrane which is generated by electron transport complexes of the respiratory chain. ATP synthase complex consist of a soluble F(1) head domain - the catalytic core - and a membrane F(1) domain - the membrane proton channel. These two domains are linked by a central stalk rotating inside the F(1) region and a stationary peripheral stalk. During catalysis, ATP synthesis in the catalytic domain of F(1) is coupled via a rotary mechanism of the central stalk subunits to proton translocation. In vivo, can only synthesize ATP although its ATP hydrolase activity can be activated artificially in vitro. Part of the complex F(0) domain. In Rattus norvegicus (Rat), this protein is ATP synthase F(0) complex subunit e, mitochondrial.